We begin with the raw amino-acid sequence, 538 residues long: Beta-1,4-mannosyl-glycoprotein 4-beta-N-acetylglucosaminyltransferase (538 aa).

Residues 1-7 (MKMRRYK) are Cytoplasmic-facing. The chain crosses the membrane as a helical; Signal-anchor for type II membrane protein span at residues 8-23 (LFLMFCMAGLCLISFL). At 24–538 (HFFKTLSYVT…VRGKLDTTEG (515 aa)) the chain is on the lumenal side. The tract at residues 121-151 (GTRMLEKPSPGRTEEKTKVAEGSSVRGPARR) is disordered. 3 N-linked (GlcNAc...) asparagine glycosylation sites follow: N245, N263, and N401. A disordered region spans residues 509-538 (PKSTVEGGRRNQGSDGRSSAVRGKLDTTEG).

It belongs to the glycosyltransferase 17 family. As to quaternary structure, interacts with MGAT4D.

It localises to the golgi apparatus membrane. The enzyme catalyses N(4)-{beta-D-GlcNAc-(1-&gt;2)-alpha-D-Man-(1-&gt;3)-[beta-D-GlcNAc-(1-&gt;2)-alpha-D-Man-(1-&gt;6)]-beta-D-Man-(1-&gt;4)-beta-D-GlcNAc-(1-&gt;4)-beta-D-GlcNAc}-L-asparaginyl-[protein] + UDP-N-acetyl-alpha-D-glucosamine = N(4)-{beta-D-GlcNAc-(1-&gt;2)-alpha-D-Man-(1-&gt;3)-[beta-D-GlcNAc-(1-&gt;4)]-[beta-D-GlcNAc-(1-&gt;2)-alpha-D-Man-(1-&gt;6)]-beta-D-Man-(1-&gt;4)-beta-D-GlcNAc-(1-&gt;4)-beta-D-GlcNAc}-L-asparaginyl-[protein] + UDP + H(+). It functions in the pathway protein modification; protein glycosylation. Functionally, it is involved in the regulation of the biosynthesis and biological function of glycoprotein oligosaccharides. Catalyzes the addition of N-acetylglucosamine in beta 1-4 linkage to the beta-linked mannose of the trimannosyl core of N-linked sugar chains, called bisecting N-acetylglucosamine (GlcNAc). It is one of the most important enzymes involved in the regulation of the biosynthesis of glycoprotein oligosaccharides. The addition of this bisecting GlcNAc residue alters not only the composition, but also the conformation of the N-glycan. The introduction of the bisecting GlcNAc residue results in the suppression of further processing and elongation of N-glycans, precluding the formation of beta-1,6 GlcNAc branching, catalyzed by MGAT5 since it is unable to use the bisected oligosaccharide as a substrate. Addition of bisecting N-acetylglucosamine to CDH1/E-cadherin modulates CDH1 cell membrane location. Inhibits NeuAc-alpha-2,3-Gal-beta-1,4-GlcNAc- formation which modulates sialylation levels and plays a role in cell migration regulation. In brain, addition of bisecting N-acetylglucosamine to BACE1 blocks its lysosomal targeting in response to oxidative stress and further degradation which increases its location to early endosome and the APP cleavage. The chain is Beta-1,4-mannosyl-glycoprotein 4-beta-N-acetylglucosaminyltransferase (Mgat3) from Rattus norvegicus (Rat).